The primary structure comprises 70 residues: DNA-directed RNA polymerases I, II, and III subunit RPABC4 (70 aa).

Zn(2+) is bound by residues Cys31, Cys34, Cys48, and Cys51. Residues 31 to 51 (CAECSSKLSLSRTDAVRCKDC) form a C4-type zinc finger.

The protein belongs to the archaeal Rpo12/eukaryotic RPC10 RNA polymerase subunit family. Component of the RNA polymerase I (Pol I), RNA polymerase II (Pol II) and RNA polymerase III (Pol III) complexes. Component of the RNA polymerase I (Pol I) complex consisting of 14 subunits: RPA135, RPA190, RPC40, RPA14, RPB5, RPO26, RPA43, RPB8, RPA12, RPB10, RPC19, RPC10, RPA49 and RPA34. The complex is composed of a horseshoe-shaped core containing ten subunits (RPA135, RPA190, RPB5, RPO26, RPB8, RPB10, RPC10, RPA12, RPC19 and RPC40) where RPA135 and RPA190 form the DNA-binding cleft. Outside of the core, RPA14 and RPA43 form the stalk that mediates interactions with transcription initiation factors and newly synthesized RNA. Component of the RNA polymerase II (Pol II) complex consisting of 12 subunits: RPO21, RPB2, RPB3, RPB4, RPB5, RPO26, RPB7, RPB8, RPB9, RPB10 and RPC10. Component of the RNA polymerase III (Pol III) complex consisting of 17 subunits. Interacts, via its C-terminus, with TFIIIC subunit TFC4. The N-terminus is blocked.

It localises to the nucleus. It is found in the nucleolus. Its subcellular location is the peroxisome. In terms of biological role, DNA-dependent RNA polymerases catalyze the transcription of DNA into RNA using the four ribonucleoside triphosphates as substrates. Common component of RNA polymerases I, II and III which synthesize ribosomal RNA precursors, mRNA precursors and many functional non-coding RNAs, and a small RNAs, such as 5S rRNA and tRNAs, respectively. RNA polymerases are composed of mobile elements that move relative to each other. In Pol II, the core element with the central large cleft comprises RPB3, RBP10, RPB11, RPB12 and regions of RPB1 and RPB2 forming the active center. This is DNA-directed RNA polymerases I, II, and III subunit RPABC4 (RPC10) from Saccharomyces cerevisiae (strain ATCC 204508 / S288c) (Baker's yeast).